A 62-amino-acid chain; its full sequence is Sperm protamine P1 (62 aa).

Residues 1 to 62 (MARYRHSRSR…RYSRRRRRRY (62 aa)) form a disordered region.

It belongs to the protamine P1 family. As to expression, testis.

The protein resides in the nucleus. It localises to the chromosome. Functionally, protamines substitute for histones in the chromatin of sperm during the haploid phase of spermatogenesis. They compact sperm DNA into a highly condensed, stable and inactive complex. The chain is Sperm protamine P1 (PRM1) from Dendrolagus dorianus (Doria's tree-kangaroo).